Reading from the N-terminus, the 201-residue chain is Large ribosomal subunit protein uL4 (201 aa).

The tract at residues 45 to 72 (AQKTRAEVTGSGKKPWRQKGTGRARAGS) is disordered.

Belongs to the universal ribosomal protein uL4 family. In terms of assembly, part of the 50S ribosomal subunit.

Functionally, one of the primary rRNA binding proteins, this protein initially binds near the 5'-end of the 23S rRNA. It is important during the early stages of 50S assembly. It makes multiple contacts with different domains of the 23S rRNA in the assembled 50S subunit and ribosome. In terms of biological role, forms part of the polypeptide exit tunnel. This Shewanella baltica (strain OS223) protein is Large ribosomal subunit protein uL4.